The sequence spans 92 residues: YcgL domain-containing protein Sama_1929 (92 aa).

Residues 1-85 (MICAVYKSSR…PKDNLLTQHR (85 aa)) form the YcgL domain.

This chain is YcgL domain-containing protein Sama_1929, found in Shewanella amazonensis (strain ATCC BAA-1098 / SB2B).